A 23-amino-acid chain; its full sequence is AGKARKQLSKNEDTKLKEQYIXD.

The segment at 1–23 (AGKARKQLSKNEDTKLKEQYIXD) is disordered. The segment covering 9–23 (SKNEDTKLKEQYIXD) has biased composition (basic and acidic residues).

The chain is Unknown protein NF005 from 2D-PAGE from Naegleria fowleri (Brain eating amoeba).